Reading from the N-terminus, the 451-residue chain is UDP-glycosyltransferase 76E11 (451 aa).

Residues Ser273, 332-334 (APQ), 349-357 (HCGWNSTLE), and 371-374 (SSDQ) contribute to the UDP-alpha-D-glucose site.

Belongs to the UDP-glycosyltransferase family.

In terms of biological role, possesses low quercetin 3-O-glucosyltransferase and 7-O-glucosyltransferase activities in vitro. The polypeptide is UDP-glycosyltransferase 76E11 (UGT76E11) (Arabidopsis thaliana (Mouse-ear cress)).